The chain runs to 126 residues: Small ribosomal subunit protein uS13 (126 aa).

The interval 98-126 (PVRGQSTKNNARTRKGRKKTVANKKKATK) is disordered. The segment covering 108 to 126 (ARTRKGRKKTVANKKKATK) has biased composition (basic residues).

This sequence belongs to the universal ribosomal protein uS13 family. Part of the 30S ribosomal subunit. Forms a loose heterodimer with protein S19. Forms two bridges to the 50S subunit in the 70S ribosome.

Located at the top of the head of the 30S subunit, it contacts several helices of the 16S rRNA. In the 70S ribosome it contacts the 23S rRNA (bridge B1a) and protein L5 of the 50S subunit (bridge B1b), connecting the 2 subunits; these bridges are implicated in subunit movement. Contacts the tRNAs in the A and P-sites. This is Small ribosomal subunit protein uS13 from Bacteroides fragilis (strain ATCC 25285 / DSM 2151 / CCUG 4856 / JCM 11019 / LMG 10263 / NCTC 9343 / Onslow / VPI 2553 / EN-2).